The chain runs to 221 residues: Esterase C25G4.2 (221 aa).

Active-site charge relay system residues include Ser-106, Asp-166, and His-194.

This sequence belongs to the LovG family.

The protein is Esterase C25G4.2 of Caenorhabditis elegans.